The sequence spans 449 residues: MLKYKGLEGKNVLVVGLAKSGYEAAKLLHHLGANVTVNDGGDLSKDPHAKDLEKMGLKVIGGHHPLSLLDSNPIIVKNPGIPYSVPLISEAEKRGLRILTEVELSYLISEAPIIAVTGTNGKTTVTSLIGDMFDKSRQTGLLSGNIGYVASKVAQEAKPEDYLITELSSFQLLGIEQYRPHIAIITNIYSAHLDYHGTLEEYRNAKRRIYKNQTEDDFLICNYNQRHLIETDGLKSKVYYFSTSQEVDGIYVKDGYIMLNGLRLIHKDDIVLPGEHNLENILAAVLAAVLGGVSIDAVIATLTSFSGIKHRLQYIGSNKTNKYYNDSKATNTLATQFALNSFNQPIIWLCGGLDRGNGFDELIPYMKNVRVMITFGETQDKLTKLGESQGKYVIRATDVKDAVDKVQNVIEPNDVVLLSPACASWDQYNTFEERGDIFIESFRAHLPSK.

G118 to T124 contacts ATP.

Belongs to the MurCDEF family.

It localises to the cytoplasm. It carries out the reaction UDP-N-acetyl-alpha-D-muramoyl-L-alanine + D-glutamate + ATP = UDP-N-acetyl-alpha-D-muramoyl-L-alanyl-D-glutamate + ADP + phosphate + H(+). It participates in cell wall biogenesis; peptidoglycan biosynthesis. In terms of biological role, cell wall formation. Catalyzes the addition of glutamate to the nucleotide precursor UDP-N-acetylmuramoyl-L-alanine (UMA). This is UDP-N-acetylmuramoylalanine--D-glutamate ligase from Staphylococcus carnosus (strain TM300).